The following is a 135-amino-acid chain: Lactoylglutathione lyase (135 aa).

One can recognise a VOC domain in the interval 2 to 126 (RLLHTMLRVG…DGYKIELIEE (125 aa)). His5 provides a ligand contact to Ni(2+). Residue Arg9 participates in substrate binding. Glu56 contacts Ni(2+). Residues Asn60 and His74 each coordinate substrate. 2 residues coordinate Ni(2+): His74 and Glu122. Glu122 serves as the catalytic Proton donor/acceptor.

Belongs to the glyoxalase I family. In terms of assembly, homodimer. The cofactor is Ni(2+).

It carries out the reaction (R)-S-lactoylglutathione = methylglyoxal + glutathione. Its pathway is secondary metabolite metabolism; methylglyoxal degradation; (R)-lactate from methylglyoxal: step 1/2. In terms of biological role, catalyzes the conversion of hemimercaptal, formed from methylglyoxal and glutathione, to S-lactoylglutathione. The polypeptide is Lactoylglutathione lyase (gloA) (Escherichia coli O157:H7).